Consider the following 59-residue polypeptide: Small ribosomal subunit protein eS17 (59 aa).

The protein belongs to the eukaryotic ribosomal protein eS17 family.

This Halobacterium salinarum (strain ATCC 29341 / DSM 671 / R1) protein is Small ribosomal subunit protein eS17.